Here is a 64-residue protein sequence, read N- to C-terminus: Thrombin-like enzyme collinein-4 (64 aa).

Cystine bridges form between cysteine 5–cysteine 23 and cysteine 34–cysteine 51.

As to quaternary structure, monomer. As to expression, expressed by the vanom gland.

It is found in the secreted. Thrombin-like snake venom serine protease. This chain is Thrombin-like enzyme collinein-4, found in Crotalus durissus collilineatus (Brazilian rattlesnake).